The following is a 351-amino-acid chain: Ferrochelatase (351 aa).

Fe cation contacts are provided by histidine 184 and glutamate 265.

Belongs to the ferrochelatase family.

Its subcellular location is the cytoplasm. The enzyme catalyses heme b + 2 H(+) = protoporphyrin IX + Fe(2+). Its pathway is porphyrin-containing compound metabolism; protoheme biosynthesis; protoheme from protoporphyrin-IX: step 1/1. Its function is as follows. Catalyzes the ferrous insertion into protoporphyrin IX. The polypeptide is Ferrochelatase (Rhodopirellula baltica (strain DSM 10527 / NCIMB 13988 / SH1)).